The chain runs to 468 residues: Glucose-dependent insulinotropic receptor (468 aa).

The Extracellular segment spans residues 1 to 6 (MESSFS). A helical transmembrane segment spans residues 7-27 (FGVILAVLTILIIAVNALVVV). Topologically, residues 28–37 (AMLLSIYKND) are cytoplasmic. A helical transmembrane segment spans residues 38 to 58 (GVGLCFTLNLAVADTLIGVAI). At 59–81 (SGLVTDQLSSSAQHTQKTLCSLR) the chain is on the extracellular side. The chain crosses the membrane as a helical span at residues 82 to 102 (MAFVTSSAAASVLTVMLIAFD). Residues 103–125 (RYLAIKQPLRYFQIMNGLVAGGC) lie on the Cytoplasmic side of the membrane. Residues 126–146 (IAGLWLISYLIGFLPLGVSIF) form a helical membrane-spanning segment. Over 147–164 (QQTTYHGPCTFFAVFHPR) the chain is Extracellular. A helical membrane pass occupies residues 165–185 (FVLTLSCAGFFPAVLLFVFFY). At 186–226 (CDMLKIASVHSQHIRKMEHAGAMVGACRPPRPVNDFKAVRT) the chain is on the cytoplasmic side. Residues 227 to 247 (VSVLIGSFTLSWSPFLITSIV) traverse the membrane as a helical segment. Residues 248–262 (QVACHKCCLYQVLEK) lie on the Extracellular side of the membrane. The chain crosses the membrane as a helical span at residues 263 to 283 (YLWLLGVGNSLLNPLIYAYWQ). The Cytoplasmic portion of the chain corresponds to 284–468 (REVRQQLCHM…MSDPLRTCRG (185 aa)).

This sequence belongs to the G-protein coupled receptor 1 family. As to expression, expression restricted to the beta-cells of pancreatic islets.

The protein resides in the cell membrane. Receptor for the endogenous fatty-acid ethanolamide oleoylethanolamide (OEA) and lysophosphatidylcholine (LPC). Functions as a glucose-dependent insulinotropic receptor. The activity of this receptor is mediated by G proteins which activate adenylate cyclase. Seems to act through a G(s) mediated pathway. In Rattus norvegicus (Rat), this protein is Glucose-dependent insulinotropic receptor (Gpr119).